Consider the following 506-residue polypeptide: Maturase K (506 aa).

It belongs to the intron maturase 2 family. MatK subfamily.

It localises to the plastid. It is found in the chloroplast. In terms of biological role, usually encoded in the trnK tRNA gene intron. Probably assists in splicing its own and other chloroplast group II introns. The sequence is that of Maturase K from Sullivantia sullivantii (Sullivant's coolwort).